A 132-amino-acid polypeptide reads, in one-letter code: uncharacterized protein (132 aa).

Lysine 59 is covalently cross-linked (Glycyl lysine isopeptide (Lys-Gly) (interchain with G-Cter in SAMP2)).

This sequence belongs to the OsmC/Ohr family.

This is an uncharacterized protein from Haloferax volcanii (strain ATCC 29605 / DSM 3757 / JCM 8879 / NBRC 14742 / NCIMB 2012 / VKM B-1768 / DS2) (Halobacterium volcanii).